A 125-amino-acid polypeptide reads, in one-letter code: Small ribosomal subunit protein eS8 (125 aa).

The tract at residues 1–30 (MTIFQGRATRKPSGGKLRPNHSKRRYELGR) is disordered.

The protein belongs to the eukaryotic ribosomal protein eS8 family. Part of the 30S ribosomal subunit.

The chain is Small ribosomal subunit protein eS8 from Picrophilus torridus (strain ATCC 700027 / DSM 9790 / JCM 10055 / NBRC 100828 / KAW 2/3).